The chain runs to 264 residues: Phosphonates import ATP-binding protein PhnC (264 aa).

Positions 8-255 constitute an ABC transporter domain; it reads LQAENLRMTF…KLIEIYGPEF (248 aa). An ATP-binding site is contributed by 40-47; that stretch reads GPSGSGKS.

This sequence belongs to the ABC transporter superfamily. Phosphonates importer (TC 3.A.1.9.1) family. As to quaternary structure, the complex is composed of two ATP-binding proteins (PhnC), two transmembrane proteins (PhnE) and a solute-binding protein (PhnD).

Its subcellular location is the cell inner membrane. The catalysed reaction is phosphonate(out) + ATP + H2O = phosphonate(in) + ADP + phosphate + H(+). Functionally, part of the ABC transporter complex PhnCDE involved in phosphonates import. Responsible for energy coupling to the transport system. The polypeptide is Phosphonates import ATP-binding protein PhnC (Maricaulis maris (strain MCS10) (Caulobacter maris)).